Consider the following 205-residue polypeptide: Large ribosomal subunit protein uL4 (205 aa).

A disordered region spans residues 56–78 (ISGTTAKPYRQKHTGRARQGSLR).

It belongs to the universal ribosomal protein uL4 family. Part of the 50S ribosomal subunit.

Its function is as follows. One of the primary rRNA binding proteins, this protein initially binds near the 5'-end of the 23S rRNA. It is important during the early stages of 50S assembly. It makes multiple contacts with different domains of the 23S rRNA in the assembled 50S subunit and ribosome. Forms part of the polypeptide exit tunnel. The polypeptide is Large ribosomal subunit protein uL4 (Ehrlichia canis (strain Jake)).